We begin with the raw amino-acid sequence, 141 residues long: MPNQNLIALGFDFGMKRIGVAVGQTVTHSANAIAILKAQDGVPDWEKIKMLIETWHANVLVVGIPYNMDGSEQTLTFAARKFARKLQTRFGLPVSMVDERLTTIEAKRQWYEQGLTKRPQHLDNYAAKLILEQWLQEQKNE.

It belongs to the YqgF nuclease family.

It is found in the cytoplasm. Its function is as follows. Could be a nuclease involved in processing of the 5'-end of pre-16S rRNA. This chain is Putative pre-16S rRNA nuclease, found in Coxiella burnetii (strain CbuG_Q212) (Coxiella burnetii (strain Q212)).